A 121-amino-acid chain; its full sequence is Large ribosomal subunit protein uL18 (121 aa).

This sequence belongs to the universal ribosomal protein uL18 family. As to quaternary structure, part of the 50S ribosomal subunit; part of the 5S rRNA/L5/L18/L25 subcomplex. Contacts the 5S and 23S rRNAs.

In terms of biological role, this is one of the proteins that bind and probably mediate the attachment of the 5S RNA into the large ribosomal subunit, where it forms part of the central protuberance. This is Large ribosomal subunit protein uL18 from Bordetella avium (strain 197N).